The sequence spans 371 residues: Ferrochelatase (371 aa).

Fe cation contacts are provided by histidine 218 and glutamate 299.

This sequence belongs to the ferrochelatase family.

The protein resides in the cytoplasm. It carries out the reaction heme b + 2 H(+) = protoporphyrin IX + Fe(2+). Its pathway is porphyrin-containing compound metabolism; protoheme biosynthesis; protoheme from protoporphyrin-IX: step 1/1. In terms of biological role, catalyzes the ferrous insertion into protoporphyrin IX. This is Ferrochelatase from Cupriavidus metallidurans (strain ATCC 43123 / DSM 2839 / NBRC 102507 / CH34) (Ralstonia metallidurans).